A 334-amino-acid chain; its full sequence is MKTKQDPRDQKNYDSLQSNLFRLIPPTTHKISLARPNGFLRGLADLVGKYSVDGAEESLFQPGAWDAPYVQPAFFDFLVHAKTISKHEPVGVPLFCFKNNSTAPSIDVLFTPISFHAAVGLPADVDPNVHRVAHIWYGDDSEVSSLMEDLNILLEESNLHTRLHPVGILVENNDSSFLNRVTALTHGPAYMSRKQAALKLVIPTDLFVDLDARLNVEAYGAQPSGGTSTVFCTLVYTRCGNDIKPALTFFKSNKSDFDVLTLIRAYYADLITNKLEVNQQCNINGLKFGVMCTVGYTDSSHSINQQSLCIRGSSLLVTSISNFFVNYTGWRVFA.

This sequence belongs to the herpesviridae TRX1 protein family. In terms of assembly, interacts with TRX2, MCP and capsid vertex component 2/CVC2.

It is found in the virion. The protein resides in the host nucleus. Its function is as follows. Structural component of the T=16 icosahedral capsid. The capsid is composed of pentamers and hexamers of major capsid protein/MCP, which are linked together by heterotrimers called triplexes. These triplexes are formed by a single molecule of triplex protein 1/TRX1 and two copies of triplex protein 2/TRX2. Additionally, TRX1 is required for efficient transport of TRX2 to the nucleus, which is the site of capsid assembly. This chain is Triplex capsid protein 1, found in Connochaetes taurinus (Blue wildebeest).